The chain runs to 187 residues: UPF0301 protein HS_0009 (187 aa).

It belongs to the UPF0301 (AlgH) family.

In Histophilus somni (strain 129Pt) (Haemophilus somnus), this protein is UPF0301 protein HS_0009.